The chain runs to 324 residues: Beta-ketoacyl-[acyl-carrier-protein] synthase III (324 aa).

Residues Cys112 and His251 contribute to the active site. Residues 252 to 256 (QANLR) form an ACP-binding region. Asn281 is an active-site residue.

Belongs to the thiolase-like superfamily. FabH family. Homodimer.

It is found in the cytoplasm. The enzyme catalyses malonyl-[ACP] + acetyl-CoA + H(+) = 3-oxobutanoyl-[ACP] + CO2 + CoA. It functions in the pathway lipid metabolism; fatty acid biosynthesis. Its function is as follows. Catalyzes the condensation reaction of fatty acid synthesis by the addition to an acyl acceptor of two carbons from malonyl-ACP. Catalyzes the first condensation reaction which initiates fatty acid synthesis and may therefore play a role in governing the total rate of fatty acid production. Possesses both acetoacetyl-ACP synthase and acetyl transacylase activities. Its substrate specificity determines the biosynthesis of branched-chain and/or straight-chain of fatty acids. The chain is Beta-ketoacyl-[acyl-carrier-protein] synthase III from Clostridium perfringens (strain ATCC 13124 / DSM 756 / JCM 1290 / NCIMB 6125 / NCTC 8237 / Type A).